The sequence spans 127 residues: Small ribosomal subunit protein bS6 (127 aa).

The segment at 101–127 (PMMKEEKARDLLQGAKADAPAEQPAAA) is disordered. Low complexity predominate over residues 115-127 (AKADAPAEQPAAA).

Belongs to the bacterial ribosomal protein bS6 family.

In terms of biological role, binds together with bS18 to 16S ribosomal RNA. This is Small ribosomal subunit protein bS6 from Thiobacillus denitrificans (strain ATCC 25259 / T1).